The sequence spans 123 residues: Ribosome-binding factor A (123 aa).

Belongs to the RbfA family. In terms of assembly, monomer. Binds 30S ribosomal subunits, but not 50S ribosomal subunits or 70S ribosomes.

The protein localises to the cytoplasm. Functionally, one of several proteins that assist in the late maturation steps of the functional core of the 30S ribosomal subunit. Associates with free 30S ribosomal subunits (but not with 30S subunits that are part of 70S ribosomes or polysomes). Required for efficient processing of 16S rRNA. May interact with the 5'-terminal helix region of 16S rRNA. The chain is Ribosome-binding factor A from Chlamydia trachomatis serovar L2 (strain ATCC VR-902B / DSM 19102 / 434/Bu).